The following is a 427-amino-acid chain: ATP-sensitive inward rectifier potassium channel 12 (427 aa).

Residues 1-77 (MTAASRANPY…LADMFTTCVD (77 aa)) lie on the Cytoplasmic side of the membrane. Cys75 is modified (S-nitrosocysteine). Residues 78–104 (IRWRYMLLIFSLAFLASWLLFGIIFWV) traverse the membrane as a helical segment. Positions 79 and 81 each coordinate a 1,2-diacyl-sn-glycero-3-phospho-(1D-myo-inositol-4,5-bisphosphate). Residues 105 to 129 (IAVAHGDLEPAEGRGRTPCVLQVHG) are Extracellular-facing. Cys123 and Cys155 are disulfide-bonded. Positions 130–146 (FMAAFLFSIETQTTIGY) form an intramembrane region, helical; Pore-forming. K(+)-binding residues include Thr143, Ile144, Gly145, and Tyr146. A Selectivity filter motif is present at residues 143–148 (TIGYGL). The Extracellular portion of the chain corresponds to 147-155 (GLRCVTEEC). The helical transmembrane segment at 156–183 (PVAVFMVVAQSIVGCIIDSFMIGAIMAK) threads the bilayer. Lys183 and Lys188 together coordinate a 1,2-diacyl-sn-glycero-3-phospho-(1D-myo-inositol-4,5-bisphosphate). The Cytoplasmic segment spans residues 184-427 (MARPKKRAQT…ERPYRRESEI (244 aa)). Residues 387–427 (DEEDEVATDRDGRSPQPEHDFDRLQASSAALERPYRRESEI) are disordered. The span at 393–409 (ATDRDGRSPQPEHDFDR) shows a compositional bias: basic and acidic residues. A PDZ-binding motif is present at residues 425 to 427 (SEI).

Belongs to the inward rectifier-type potassium channel (TC 1.A.2.1) family. KCNJ12 subfamily. In terms of assembly, homotetramer. Forms heteromer with KCNJ4. Can form heteromeric channels with Kir2.6/KCNJ18. Association, via its PDZ-recognition domain, with LIN7A, LIN7B, LIN7C, DLG1, CASK and APBA1 plays a key role in its localization and trafficking. As to expression, highest level in cerebellum.

It is found in the membrane. Its subcellular location is the cell membrane. It localises to the sarcolemma. The protein localises to the T-tubule. It catalyses the reaction K(+)(in) = K(+)(out). Its activity is regulated as follows. Activated by phosphatidylinositol 4,5-biphosphate (PtdIns(4,5)P2). PtdIns(4,5)P2 binding to the cytoplasmic side of the channel triggers a conformation change leading to channel opening. Inhibited by Ba(2+). Functionally, inward rectifying potassium channel that probably participates in controlling the resting membrane potential in electrically excitable cells. It probably participates in establishing action potential waveform and excitability of neuronal and muscle tissues. Inward rectifier potassium channels are characterized by a greater tendency to allow potassium to flow into the cell rather than out of it. Their voltage dependence is regulated by the concentration of extracellular potassium; as external potassium is raised, the voltage range of the channel opening shifts to more positive voltages. The inward rectification is mainly due to the blockage of outward current by internal magnesium. The chain is ATP-sensitive inward rectifier potassium channel 12 (Kcnj12) from Mus musculus (Mouse).